A 476-amino-acid chain; its full sequence is Membrane-bound lytic murein transglycosylase F (476 aa).

The signal sequence occupies residues 1 to 16 (MIKTLFIILLCGILSA). Residues 17–259 (CQPVDIQDVD…HLNEKYFGHV (243 aa)) form a non-LT domain region. The LT domain stretch occupies residues 260–476 (KRFDYVDTRA…VPAKSHVSAQ (217 aa)). Glu-304 is an active-site residue.

This sequence in the N-terminal section; belongs to the bacterial solute-binding protein 3 family. In the C-terminal section; belongs to the transglycosylase Slt family.

The protein localises to the cell outer membrane. The enzyme catalyses Exolytic cleavage of the (1-&gt;4)-beta-glycosidic linkage between N-acetylmuramic acid (MurNAc) and N-acetylglucosamine (GlcNAc) residues in peptidoglycan, from either the reducing or the non-reducing ends of the peptidoglycan chains, with concomitant formation of a 1,6-anhydrobond in the MurNAc residue.. Murein-degrading enzyme that degrades murein glycan strands and insoluble, high-molecular weight murein sacculi, with the concomitant formation of a 1,6-anhydromuramoyl product. Lytic transglycosylases (LTs) play an integral role in the metabolism of the peptidoglycan (PG) sacculus. Their lytic action creates space within the PG sacculus to allow for its expansion as well as for the insertion of various structures such as secretion systems and flagella. The sequence is that of Membrane-bound lytic murein transglycosylase F from Shewanella frigidimarina (strain NCIMB 400).